A 507-amino-acid chain; its full sequence is Chromosomal replication initiator protein DnaA (507 aa).

The interval 1-112 (MTDDPGSGFT…PATDEADDTT (112 aa)) is domain I, interacts with DnaA modulators. A disordered region spans residues 99–155 (RIAPPATDEADDTTVPPSENPATTSPDTTTDNDEIDDSAAARGDNQHSWPSYFTERP). Residues 113-127 (VPPSENPATTSPDTT) show a composition bias toward polar residues. Residues 113–166 (VPPSENPATTSPDTTTDNDEIDDSAAARGDNQHSWPSYFTERPHNTDSATAGVT) are domain II. Residues 167 to 383 (SLNRRYTFDT…GALIRVTAFA (217 aa)) form a domain III, AAA+ region region. Residues G211, G213, K214, and T215 each coordinate ATP. The segment at 384 to 507 (SLNKTPIDKA…TTRIRQRSKR (124 aa)) is domain IV, binds dsDNA.

This sequence belongs to the DnaA family. Oligomerizes as a right-handed, spiral filament on DNA at oriC.

The protein localises to the cytoplasm. Its function is as follows. Plays an essential role in the initiation and regulation of chromosomal replication. ATP-DnaA binds to the origin of replication (oriC) to initiate formation of the DNA replication initiation complex once per cell cycle. Binds the DnaA box (a 9 base pair repeat at the origin) and separates the double-stranded (ds)DNA. Forms a right-handed helical filament on oriC DNA; dsDNA binds to the exterior of the filament while single-stranded (ss)DNA is stabiized in the filament's interior. The ATP-DnaA-oriC complex binds and stabilizes one strand of the AT-rich DNA unwinding element (DUE), permitting loading of DNA polymerase. After initiation quickly degrades to an ADP-DnaA complex that is not apt for DNA replication. Binds acidic phospholipids. This Mycobacterium tuberculosis (strain ATCC 25177 / H37Ra) protein is Chromosomal replication initiator protein DnaA.